The following is a 268-amino-acid chain: Ubiquinone biosynthesis protein COQ4 homolog 1, mitochondrial (268 aa).

The segment covering 1 to 10 (MFLRRVHPVR) has biased composition (basic residues). A mitochondrion-targeting transit peptide spans 1–18 (MFLRRVHPVRLGHASQRS). Residues 1–44 (MFLRRVHPVRLGHASQRSLTTTKSRNESTTTTVEAPQAAPSPPP) form a disordered region. A compositionally biased stretch (low complexity) spans 20–38 (TTTKSRNESTTTTVEAPQA). His-177, Asp-178, His-181, and Glu-193 together coordinate Zn(2+).

The protein belongs to the COQ4 family. Component of a multi-subunit COQ enzyme complex. Zn(2+) is required as a cofactor.

Its subcellular location is the mitochondrion inner membrane. The enzyme catalyses a 4-hydroxy-3-methoxy-5-(all-trans-polyprenyl)benzoate + H(+) = a 2-methoxy-6-(all-trans-polyprenyl)phenol + CO2. It participates in cofactor biosynthesis; ubiquinone biosynthesis. Lyase that catalyzes the C1-decarboxylation of 4-hydroxy-3-methoxy-5-(all-trans-polyprenyl)benzoic acid into 2-methoxy-6-(all-trans-polyprenyl)phenol during ubiquinone biosynthesis. This is Ubiquinone biosynthesis protein COQ4 homolog 1, mitochondrial from Culex quinquefasciatus (Southern house mosquito).